A 156-amino-acid polypeptide reads, in one-letter code: Small ribosomal subunit protein uS7 (156 aa).

The protein belongs to the universal ribosomal protein uS7 family. Part of the 30S ribosomal subunit. Contacts proteins S9 and S11.

One of the primary rRNA binding proteins, it binds directly to 16S rRNA where it nucleates assembly of the head domain of the 30S subunit. Is located at the subunit interface close to the decoding center, probably blocks exit of the E-site tRNA. The sequence is that of Small ribosomal subunit protein uS7 from Alcanivorax borkumensis (strain ATCC 700651 / DSM 11573 / NCIMB 13689 / SK2).